Consider the following 327-residue polypeptide: Tetraacyldisaccharide 4'-kinase (327 aa).

52–59 contributes to the ATP binding site; the sequence is TLGGAGKT.

This sequence belongs to the LpxK family.

It carries out the reaction a lipid A disaccharide + ATP = a lipid IVA + ADP + H(+). The protein operates within glycolipid biosynthesis; lipid IV(A) biosynthesis; lipid IV(A) from (3R)-3-hydroxytetradecanoyl-[acyl-carrier-protein] and UDP-N-acetyl-alpha-D-glucosamine: step 6/6. Transfers the gamma-phosphate of ATP to the 4'-position of a tetraacyldisaccharide 1-phosphate intermediate (termed DS-1-P) to form tetraacyldisaccharide 1,4'-bis-phosphate (lipid IVA). The chain is Tetraacyldisaccharide 4'-kinase from Methylorubrum extorquens (strain PA1) (Methylobacterium extorquens).